Reading from the N-terminus, the 232-residue chain is Chromosome partition protein MukE (232 aa).

Residues 203–232 form a disordered region; it reads HTKEPSQGSLLSEEDQEEQAQEEMTEEGEA. A compositionally biased stretch (acidic residues) spans 214-232; it reads SEEDQEEQAQEEMTEEGEA.

Belongs to the MukE family. As to quaternary structure, interacts, and probably forms a ternary complex, with MukF and MukB. The complex formation is stimulated by calcium or magnesium.

The protein resides in the cytoplasm. It is found in the nucleoid. Functionally, involved in chromosome condensation, segregation and cell cycle progression. May participate in facilitating chromosome segregation by condensation DNA from both sides of a centrally located replisome during cell division. Probably acts via its interaction with MukB and MukF. In Vibrio parahaemolyticus serotype O3:K6 (strain RIMD 2210633), this protein is Chromosome partition protein MukE.